We begin with the raw amino-acid sequence, 71 residues long: UPF0346 protein str0441 (71 aa).

This sequence belongs to the UPF0346 family.

This chain is UPF0346 protein str0441, found in Streptococcus thermophilus (strain CNRZ 1066).